The following is a 448-amino-acid chain: Chromosomal replication initiator protein DnaA (448 aa).

The tract at residues 1 to 73 (MNTHLTETWE…VNALKLLTSK (73 aa)) is domain I, interacts with DnaA modulators. The domain II stretch occupies residues 73-109 (KKYNIDFIVTTEEKIEENQKNHNNEKSNIVVNDEMST). The tract at residues 110–326 (MLNPKYTFDS…GALIRIVAFS (217 aa)) is domain III, AAA+ region. ATP is bound by residues glycine 154, glycine 156, lysine 157, and threonine 158. The interval 327–448 (SLTNKEISID…KELNKRINQK (122 aa)) is domain IV, binds dsDNA.

It belongs to the DnaA family. In terms of assembly, oligomerizes as a right-handed, spiral filament on DNA at oriC.

It is found in the cytoplasm. Its function is as follows. Plays an essential role in the initiation and regulation of chromosomal replication. ATP-DnaA binds to the origin of replication (oriC) to initiate formation of the DNA replication initiation complex once per cell cycle. Binds the DnaA box (a 9 base pair repeat at the origin) and separates the double-stranded (ds)DNA. Forms a right-handed helical filament on oriC DNA; dsDNA binds to the exterior of the filament while single-stranded (ss)DNA is stabiized in the filament's interior. The ATP-DnaA-oriC complex binds and stabilizes one strand of the AT-rich DNA unwinding element (DUE), permitting loading of DNA polymerase. After initiation quickly degrades to an ADP-DnaA complex that is not apt for DNA replication. Binds acidic phospholipids. The polypeptide is Chromosomal replication initiator protein DnaA (Clostridium botulinum (strain ATCC 19397 / Type A)).